Here is a 66-residue protein sequence, read N- to C-terminus: Beta-toxin Chui2 (66 aa).

The LCN-type CS-alpha/beta domain occupies 1–66; it reads KEGYIVNSYT…VWPLKNKTCN (66 aa). 4 disulfides stabilise this stretch: C12-C65, C16-C41, C25-C46, and C29-C48. N66 is modified (asparagine amide).

It belongs to the long (4 C-C) scorpion toxin superfamily. Sodium channel inhibitor family. Beta subfamily. As to expression, expressed by the venom gland.

The protein resides in the secreted. Its function is as follows. Beta toxins bind voltage-independently at site-4 of sodium channels (Nav) and shift the voltage of activation toward more negative potentials thereby affecting sodium channel activation and promoting spontaneous and repetitive firing. This chain is Beta-toxin Chui2, found in Centruroides huichol (Scorpion).